Consider the following 276-residue polypeptide: Rhomboid protease GlpG (276 aa).

6 helical membrane passes run 94–114 (GPVT…MSLI), 142–162 (IFMH…WYLG), 169–189 (LGSG…GYVQ), 192–212 (FSGP…GYVW), 229–249 (LIIF…GMSM), and 250–270 (ANGA…VDTL). Residue Ser201 is the Nucleophile of the active site. His254 is an active-site residue.

It belongs to the peptidase S54 family.

Its subcellular location is the cell inner membrane. The enzyme catalyses Cleaves type-1 transmembrane domains using a catalytic dyad composed of serine and histidine that are contributed by different transmembrane domains.. Rhomboid-type serine protease that catalyzes intramembrane proteolysis. This Salmonella typhi protein is Rhomboid protease GlpG.